A 237-amino-acid chain; its full sequence is tRNA (guanine-N(7)-)-methyltransferase (237 aa).

4 residues coordinate S-adenosyl-L-methionine: Glu-68, Glu-93, Asp-120, and Asp-143. Residue Asp-143 is part of the active site. Substrate-binding positions include Lys-147, Asp-179, and Thr-216–Glu-219.

The protein belongs to the class I-like SAM-binding methyltransferase superfamily. TrmB family.

The catalysed reaction is guanosine(46) in tRNA + S-adenosyl-L-methionine = N(7)-methylguanosine(46) in tRNA + S-adenosyl-L-homocysteine. It functions in the pathway tRNA modification; N(7)-methylguanine-tRNA biosynthesis. Its function is as follows. Catalyzes the formation of N(7)-methylguanine at position 46 (m7G46) in tRNA. The protein is tRNA (guanine-N(7)-)-methyltransferase of Shewanella pealeana (strain ATCC 700345 / ANG-SQ1).